A 288-amino-acid chain; its full sequence is Quinate/shikimate dehydrogenase (288 aa).

Substrate contacts are provided by lysine 71 and aspartate 107. NAD(+)-binding positions include 132–135 (AGGA), 155–158 (NRRD), lysine 205, 232–235 (CVYN), and glycine 255.

This sequence belongs to the shikimate dehydrogenase family. Homodimer.

The catalysed reaction is L-quinate + NAD(+) = 3-dehydroquinate + NADH + H(+). It catalyses the reaction L-quinate + NADP(+) = 3-dehydroquinate + NADPH + H(+). The enzyme catalyses shikimate + NADP(+) = 3-dehydroshikimate + NADPH + H(+). It carries out the reaction shikimate + NAD(+) = 3-dehydroshikimate + NADH + H(+). It functions in the pathway metabolic intermediate biosynthesis; chorismate biosynthesis; chorismate from D-erythrose 4-phosphate and phosphoenolpyruvate: step 4/7. Its function is as follows. The actual biological function of YdiB remains unclear, nor is it known whether 3-dehydroshikimate or quinate represents the natural substrate. Catalyzes the reversible NAD-dependent reduction of both 3-dehydroshikimate (DHSA) and 3-dehydroquinate to yield shikimate (SA) and quinate, respectively. It can use both NAD or NADP for catalysis, however it has higher catalytic efficiency with NAD. In Escherichia coli O139:H28 (strain E24377A / ETEC), this protein is Quinate/shikimate dehydrogenase.